The following is a 286-amino-acid chain: MQIPFTKMHGLGNNYVYIDLFDYAIDEKLYHDLAIQISDVYTGIGSDGMILIHPTTDADVGMRIFNKDGSEGKSCGNGLRCTAKYAYENGIVTNKKFHIQTKANIVEAEVSVDNNKVNQVTIDMGEPILARNEIPMMGNNDVKVVNEPFVVAGETQYITAVSMGNPHGVFFVDDIEKAPLETLGPTIEKDMRFPESINVEFIEVVSPTELNFRVWERGSGITQACGTGACAAVVAATLNEKVTKSHPIVVHLAGGDLNIEWKEDNHVWMTGPAEVIATGLFYYKEE.

The substrate site is built by asparagine 13 and asparagine 66. Cysteine 75 (proton donor) is an active-site residue. Residues glycine 76–asparagine 77, asparagine 165, asparagine 198, and glutamate 216–arginine 217 each bind substrate. Cysteine 225 functions as the Proton acceptor in the catalytic mechanism. Glycine 226–threonine 227 serves as a coordination point for substrate.

It belongs to the diaminopimelate epimerase family. In terms of assembly, homodimer.

It localises to the cytoplasm. It catalyses the reaction (2S,6S)-2,6-diaminopimelate = meso-2,6-diaminopimelate. It participates in amino-acid biosynthesis; L-lysine biosynthesis via DAP pathway; DL-2,6-diaminopimelate from LL-2,6-diaminopimelate: step 1/1. Its function is as follows. Catalyzes the stereoinversion of LL-2,6-diaminopimelate (L,L-DAP) to meso-diaminopimelate (meso-DAP), a precursor of L-lysine and an essential component of the bacterial peptidoglycan. The chain is Diaminopimelate epimerase from Oceanobacillus iheyensis (strain DSM 14371 / CIP 107618 / JCM 11309 / KCTC 3954 / HTE831).